Consider the following 204-residue polypeptide: MSYKHLISACIFSSLCLGQVNAVLAEDKLPPSNTSTGQHSELSVDNDNLWQRLLRNISLAWDSPNQELYIPLNTWHNRWTYDDDKIESYNERPWGIGYGKYRYDENNNWHAVYAMAFMDSHNEVEPIIGYGYQKMWIPAEMDGWRFGVGFTASITARHEYHYIPIPLPLPLISIEYNKFSLQTTYIPGTYNNGNVLFTWMRWQF.

Residues 1–25 form the signal peptide; that stretch reads MSYKHLISACIFSSLCLGQVNAVLA. Catalysis depends on residues His-76, Asp-119, and Ser-120.

This sequence belongs to the lipid A palmitoyltransferase family. Homodimer.

Its subcellular location is the cell outer membrane. The catalysed reaction is a lipid A + a 1,2-diacyl-sn-glycero-3-phosphocholine = a hepta-acyl lipid A + a 2-acyl-sn-glycero-3-phosphocholine. It catalyses the reaction a lipid IVA + a 1,2-diacyl-sn-glycero-3-phosphocholine = a lipid IVB + a 2-acyl-sn-glycero-3-phosphocholine. The enzyme catalyses a lipid IIA + a 1,2-diacyl-sn-glycero-3-phosphocholine = a lipid IIB + a 2-acyl-sn-glycero-3-phosphocholine. Its function is as follows. Transfers a fatty acid residue from the sn-1 position of a phospholipid to the N-linked hydroxyfatty acid chain on the proximal unit of lipid A or its precursors. The sequence is that of Lipid A acyltransferase PagP from Yersinia enterocolitica serotype O:8 / biotype 1B (strain NCTC 13174 / 8081).